The following is a 350-amino-acid chain: Aminomethyltransferase (350 aa).

It belongs to the GcvT family. The glycine cleavage system is composed of four proteins: P, T, L and H.

It catalyses the reaction N(6)-[(R)-S(8)-aminomethyldihydrolipoyl]-L-lysyl-[protein] + (6S)-5,6,7,8-tetrahydrofolate = N(6)-[(R)-dihydrolipoyl]-L-lysyl-[protein] + (6R)-5,10-methylene-5,6,7,8-tetrahydrofolate + NH4(+). In terms of biological role, the glycine cleavage system catalyzes the degradation of glycine. This chain is Aminomethyltransferase, found in Aquifex aeolicus (strain VF5).